Reading from the N-terminus, the 152-residue chain is Natriuretic peptides A (152 aa).

An N-terminal signal peptide occupies residues 1 to 24 (MGSSAITVSFLLFLAFQLPGQTGA). 2 propeptides span residues 25–122 (NPVY…TAPR) and 92–102 (EGGVLGRGPWE). The interval 58 to 101 (PSQVLSEQNEEAGAPLSPLSEMPPWMGEVNPAQREGGVLGRGPW) is disordered. S128 carries the phosphoserine modification. The cysteines at positions 129 and 145 are disulfide-linked. The segment at 146-150 (NSFRY) is important for degradation of atrial natriuretic peptide by IDE.

Belongs to the natriuretic peptide family. As to quaternary structure, homodimer; disulfide-linked antiparallel dimer. In terms of processing, the precursor molecule is proteolytically cleaved by CORIN at Arg-122 to produce the atrial natriuretic peptide. Undergoes further proteolytic cleavage by unknown proteases to give rise to long-acting natriuretic peptide, vessel dilator and kaliuretic peptide. Additional processing gives rise to the auriculin and atriopeptin peptides. In the kidneys, alternative processing by an unknown protease results in the peptide urodilatin. Cleavage by MME initiates degradation of the factor and thereby regulates its activity. Degradation by IDE results in reduced activation of NPR1 (in vitro). During IDE degradation, the resulting products can temporarily stimulate NPR2 to produce cGMP, before the fragments are completely degraded and inactivated by IDE (in vitro). Post-translationally, degraded by IDE. In terms of processing, phosphorylation on Ser-128 decreases vasorelaxant activity.

It is found in the secreted. The protein localises to the perikaryon. Its subcellular location is the cell projection. Its function is as follows. Hormone that plays a key role in mediating cardio-renal homeostasis, and is involved in vascular remodeling and regulating energy metabolism. Acts by specifically binding and stimulating NPR1 to produce cGMP, which in turn activates effector proteins, such as PRKG1, that drive various biological responses. Regulates vasodilation, natriuresis, diuresis and aldosterone synthesis and is therefore essential for regulating blood pressure, controlling the extracellular fluid volume and maintaining the fluid-electrolyte balance. Also involved in inhibiting cardiac remodeling and cardiac hypertrophy by inducing cardiomyocyte apoptosis and attenuating the growth of cardiomyocytes and fibroblasts. Plays a role in female pregnancy by promoting trophoblast invasion and spiral artery remodeling in uterus, and thus prevents pregnancy-induced hypertension. In adipose tissue, acts in various cGMP- and PKG-dependent pathways to regulate lipid metabolism and energy homeostasis. This includes up-regulating lipid metabolism and mitochondrial oxygen utilization by activating the AMP-activated protein kinase (AMPK), and increasing energy expenditure by acting via MAPK11 to promote the UCP1-dependent thermogenesis of brown adipose tissue. Binds the clearance receptor NPR3 which removes the hormone from circulation. May have a role in cardio-renal homeostasis through regulation of natriuresis, diuresis, vasodilation, and inhibiting aldosterone synthesis. In vitro, promotes the production of cGMP and induces vasodilation. May promote natriuresis, at least in part, by enhancing prostaglandin E2 synthesis resulting in the inhibition of renal Na+-K+-ATPase. However reports on the involvement of this peptide in mammal blood volume and blood pressure homeostasis are conflicting; according to a report, in vivo it is not sufficient to activate cGMP and does not inhibit collecting duct transport nor effect diuresis and natriuresis. Appears to bind to specific receptors that are distinct from the receptors bound by atrial natriuretic peptide and vessel dilator. Possibly enhances protein excretion in urine by decreasing proximal tubular protein reabsorption. Functionally, may have a role in cardio-renal homeostasis through regulation of natriuresis, diuresis, and vasodilation. In vitro, promotes the production of cGMP and induces vasodilation. May promote natriuresis, at least in part, by enhancing prostaglandin E2 synthesis resulting in the inhibition of renal Na+-K+-ATPase. However reports on the involvement of this peptide in mammal blood volume and blood pressure homeostasis are conflicting; according to a report it is not sufficient to activate cGMP and does not inhibit collecting duct transport nor effect diuresis and natriuresis. Appears to bind to specific receptors that are distinct from the receptors bound by the atrial natriuretic and long-acting natriuretic peptides. Possibly functions in protein excretion in urine by maintaining the integrity of the proximal tubules and enhancing protein excretion by decreasing proximal tubular protein reabsorption. In terms of biological role, may have a role in cardio-renal homeostasis through regulation of diuresis and inhibiting aldosterone synthesis. In vitro, promotes the production of cGMP and induces vasodilation. May promote natriuresis, at least in part, by enhancing prostaglandin E2 synthesis resulting in the inhibition of renal Na+-K+-ATPase. May have a role in potassium excretion but not sodium excretion (natriuresis). Possibly enhances protein excretion in urine by decreasing proximal tubular protein reabsorption. Its function is as follows. Hormone produced in the kidneys that appears to be important for maintaining cardio-renal homeostasis. Mediates vasodilation, natriuresis and diuresis primarily in the renal system, in order to maintain the extracellular fluid volume and control the fluid-electrolyte balance. Specifically binds and stimulates cGMP production by renal transmembrane receptors, likely NPR1. Urodilatin not ANP, may be the natriuretic peptide responsible for the regulation of sodium and water homeostasis in the kidney. May have a role in cardio-renal homeostasis through regulation of natriuresis and vasodilation. In vivo promotes natriuresis and in vitro, vasodilates renal artery strips. Functionally, may have a role in cardio-renal homeostasis through regulation of regulation of natriuresis and vasodilation. In vivo promotes natriuresis. In vitro, vasodilates intestinal smooth muscle but not smooth muscle strips. In terms of biological role, may have a role in cardio-renal homeostasis through regulation of natriuresis and vasodilation. In vivo promotes natriuresis. In vitro, selectively vasodilates intestinal and vascular smooth muscle strips. Its function is as follows. May have a role in cardio-renal homeostasis through regulation of natriuresis and vasodilation. In vivo promotes natriuresis. In vitro, selectively vasodilates intestinal smooth muscle but not vascular smooth muscle strips. In Bos taurus (Bovine), this protein is Natriuretic peptides A (NPPA).